The chain runs to 284 residues: Probable O-methyltransferase ustE (284 aa).

Residues asparagine 22 and asparagine 29 are each glycosylated (N-linked (GlcNAc...) asparagine). A run of 2 helical transmembrane segments spans residues 88–108 and 157–177; these read LLLLFMDILAAAKHFWFVLTV and YLATGFIIFAVGLVTECVCEI. Asparagine 205 carries N-linked (GlcNAc...) asparagine glycosylation. The helical transmembrane segment at 215 to 235 threads the bilayer; the sequence is GLALASGGMIYGMSIAMFFMW. An N-linked (GlcNAc...) asparagine glycan is attached at asparagine 264.

Belongs to the class VI-like SAM-binding methyltransferase superfamily. Isoprenylcysteine carboxyl methyltransferase family.

It localises to the membrane. Its pathway is secondary metabolite biosynthesis. Probable O-methyltransferase; part of the gene cluster that mediates the biosynthesis of ustilaginoidins, dimeric gamma-naphthopyrones isolated from different fungal species. The first step in the biosynthesis of ustilaginoidins is the production of gamma-naphthopyrone precursor YWA1 by the non-reducing polyketide synthase ustP, via condensation of one acetyl-CoA starter unit with 6 malonyl-CoA units. YWA1 is then probably substrate of the ustZ to yield norrubrofusarin via a dehydration reaction. A key enzyme in the biosynthetic pathway is the laccase ustL, which catalyzes the oxidative dimerization of norrubrofusarin to ustilaginoidin A. It can produce the M- and P-atropisomers in varying amounts, depending on the reaction conditions. For the biosynthesis of 3-methylustilaginoid in derivatives such as chaetochromin A, a methylated derivative of YWA1 is required. The C-methylation is considered to be catalyzed by ustM, the phosphopantetheine attachment site of which indicates that it acts on the growing polyketide chain before release of the product. For the biosynthesis of chaetochromin A, it is assumed that saturation of the D2 double bond takes place before dimerization, and is probably catalyzed by an external reductase because no candidate gene was identified within the cluster. This Ustilaginoidea virens (Rice false smut fungus) protein is Probable O-methyltransferase ustE.